A 618-amino-acid chain; its full sequence is MEGAEAGARATFGAWDYGVFATMLLVSTGIGLWVGLARGGQRSADDFFTGGRQLAAVPVGLSLAASFMSAVQVLGVPAEAARYGLKFLWMCAGQLLNSLLTAFLFLPIFYRLGLTSTYQYLELRFSRAVRLCGTLQYLVATMLYTGIVIYAPALILNQVTGLDIWASLLSTGIICTLYTTVGGMKAVVWTDVFQVVVMLVGFWVILARGVILLGGPRNVLSLAQNHSRINLMDFDPDPRSRYTFWTFIVGGTLVWLSMYGVNQAQVQRYVACHTEGKAKLALLVNQLGLFLIVASAACCGIVMFVYYKDCDPLLTGRISAPDQYMPLLVLDIFEDLPGVPGLFLACAYSGTLSTASTSINAMAAVTVEDLIKPRMPGLAPRKLVFISKGLSFIYGSACLTVAALSSLLGGGVLQGSFTVMGVISGPLLGAFTLGMLLPACNTPGVLSGLAAGLAVSLWVAVGATLYPPGEQTMGVLPTSAAGCTNDSVLLGPPGATNASNGIPSSGMDTGRPALADTFYAISYLYYGALGTLTTMLCGALISYLTGPTKRSSLGPGLLWWDLARQTASVAPKEDTATLEESLVKGPEDIPAVTKKPPGLKPGAETHPLYLGHDVETNL.

Over 1-14 (MEGAEAGARATFGA) the chain is Extracellular. A helical membrane pass occupies residues 15–31 (WDYGVFATMLLVSTGIG). At 32–56 (LWVGLARGGQRSADDFFTGGRQLAA) the chain is on the cytoplasmic side. Residues 57–80 (VPVGLSLAASFMSAVQVLGVPAEA) traverse the membrane as a discontinuously helical segment. Na(+) is bound by residues Ser-69, Val-71, and Gln-72. Val-76 contributes to the iodide binding site. The Extracellular segment spans residues 81–84 (ARYG). A helical membrane pass occupies residues 85–105 (LKFLWMCAGQLLNSLLTAFLF). Met-90 lines the iodide pocket. Residues 106-130 (LPIFYRLGLTSTYQYLELRFSRAVR) are Cytoplasmic-facing. The helical transmembrane segment at 131–157 (LCGTLQYLVATMLYTGIVIYAPALILN) threads the bilayer. Position 144 (Tyr-144) interacts with Na(+). The Extracellular portion of the chain corresponds to 158-163 (QVTGLD). Residues 164-181 (IWASLLSTGIICTLYTTV) form a helical membrane-spanning segment. At 182 to 189 (GGMKAVVW) the chain is on the cytoplasmic side. Residues 190–208 (TDVFQVVVMLVGFWVILAR) form a helical membrane-spanning segment. Over 209-243 (GVILLGGPRNVLSLAQNHSRINLMDFDPDPRSRYT) the chain is Extracellular. The discontinuously helical transmembrane segment at 244–266 (FWTFIVGGTLVWLSMYGVNQAQV) threads the bilayer. Residue Trp-255 coordinates iodide. Position 258 (Met-258) interacts with Na(+). The Cytoplasmic portion of the chain corresponds to 267 to 278 (QRYVACHTEGKA). The chain crosses the membrane as a helical span at residues 279–301 (KLALLVNQLGLFLIVASAACCGI). The Extracellular segment spans residues 302-335 (VMFVYYKDCDPLLTGRISAPDQYMPLLVLDIFED). Residues 336-363 (LPGVPGLFLACAYSGTLSTASTSINAMA) traverse the membrane as a helical segment. Topologically, residues 364–386 (AVTVEDLIKPRMPGLAPRKLVFI) are cytoplasmic. Residues 387-408 (SKGLSFIYGSACLTVAALSSLL) form a helical membrane-spanning segment. The Extracellular segment spans residues 409 to 411 (GGG). A helical transmembrane segment spans residues 412-437 (VLQGSFTVMGVISGPLLGAFTLGMLL). Leu-413 is an iodide binding site. Ser-416 and Phe-417 together coordinate Na(+). Phe-417 contacts iodide. Residues 438 to 441 (PACN) are Cytoplasmic-facing. A helical transmembrane segment spans residues 442-465 (TPGVLSGLAAGLAVSLWVAVGATL). Topologically, residues 466–520 (YPPGEQTMGVLPTSAAGCTNDSVLLGPPGATNASNGIPSSGMDTGRPALADTFYA) are extracellular. Asn-485 and Asn-497 each carry an N-linked (GlcNAc...) asparagine glycan. Residues 521–545 (ISYLYYGALGTLTTMLCGALISYLT) form a helical membrane-spanning segment. Over 546–618 (GPTKRSSLGP…YLGHDVETNL (73 aa)) the chain is Cytoplasmic. Ser-551 is subject to Phosphoserine; by PKA. Residues 587-618 (EDIPAVTKKPPGLKPGAETHPLYLGHDVETNL) form a disordered region.

It belongs to the sodium:solute symporter (SSF) (TC 2.A.21) family. In terms of assembly, monomer.

It is found in the cell membrane. It localises to the cytoplasm. It carries out the reaction iodide(out) + 2 Na(+)(out) = iodide(in) + 2 Na(+)(in). The catalysed reaction is chlorate(out) + 2 Na(+)(out) = chlorate(in) + 2 Na(+)(in). It catalyses the reaction thiocyanate(out) + 2 Na(+)(out) = thiocyanate(in) + 2 Na(+)(in). The enzyme catalyses nitrate(out) + 2 Na(+)(out) = nitrate(in) + 2 Na(+)(in). It carries out the reaction selenocyanate(out) + 2 Na(+)(out) = selenocyanate(in) + 2 Na(+)(in). With respect to regulation, perchlorate inhibits iodide transport activity. Oxyanions inhibit iodide transport activity by blocking the binding sites for iodide and one of the sodium ions. Functionally, sodium:iodide symporter that mediates the transport of iodide into the thyroid gland. Can also mediate the transport of chlorate, thiocynate, nitrate and selenocynate. The protein is Sodium/iodide cotransporter (Slc5a5) of Rattus norvegicus (Rat).